The sequence spans 188 residues: Probable chorismate pyruvate-lyase (188 aa).

Residues R90, L128, and E175 each contribute to the substrate site.

Belongs to the UbiC family.

It is found in the cytoplasm. It carries out the reaction chorismate = 4-hydroxybenzoate + pyruvate. Its pathway is cofactor biosynthesis; ubiquinone biosynthesis. Removes the pyruvyl group from chorismate, with concomitant aromatization of the ring, to provide 4-hydroxybenzoate (4HB) for the ubiquinone pathway. This Marinobacter nauticus (strain ATCC 700491 / DSM 11845 / VT8) (Marinobacter aquaeolei) protein is Probable chorismate pyruvate-lyase.